We begin with the raw amino-acid sequence, 501 residues long: 2,3-bisphosphoglycerate-independent phosphoglycerate mutase (501 aa).

Residues D12 and S62 each coordinate Mn(2+). S62 serves as the catalytic Phosphoserine intermediate. Residues H121, 150 to 151, R182, R188, 253 to 256, and K322 contribute to the substrate site; these read RD and RSDR. Mn(2+) is bound by residues D389, H393, D430, H431, and H449.

The protein belongs to the BPG-independent phosphoglycerate mutase family. Monomer. Mn(2+) is required as a cofactor.

The enzyme catalyses (2R)-2-phosphoglycerate = (2R)-3-phosphoglycerate. Its pathway is carbohydrate degradation; glycolysis; pyruvate from D-glyceraldehyde 3-phosphate: step 3/5. Its function is as follows. Catalyzes the interconversion of 2-phosphoglycerate and 3-phosphoglycerate. This chain is 2,3-bisphosphoglycerate-independent phosphoglycerate mutase, found in Ehrlichia ruminantium (strain Gardel).